The sequence spans 104 residues: MVNIPKTRNTFCKKCKGYSAHKVSQAKKSKDNPRAQGNRRYARKQRGYGGQTKPILRRKAKVTKKLVLNLECTKCKFSHQKPLKRAKHVIFGGERKRKGEALVY.

Positions 22–56 (KVSQAKKSKDNPRAQGNRRYARKQRGYGGQTKPIL) are disordered.

This sequence belongs to the eukaryotic ribosomal protein eL42 family.

The protein is Large ribosomal subunit protein eL42 (RPL44) of Encephalitozoon cuniculi (strain GB-M1) (Microsporidian parasite).